The chain runs to 132 residues: UPF0102 protein Achl_2213 (132 aa).

The protein belongs to the UPF0102 family.

This Pseudarthrobacter chlorophenolicus (strain ATCC 700700 / DSM 12829 / CIP 107037 / JCM 12360 / KCTC 9906 / NCIMB 13794 / A6) (Arthrobacter chlorophenolicus) protein is UPF0102 protein Achl_2213.